The primary structure comprises 81 residues: Conotoxin Im016 (81 aa).

The N-terminal stretch at 1–21 is a signal peptide; sequence MSTLGMMLLILLLLVPLATFA. A propeptide spanning residues 22 to 31 is cleaved from the precursor; it reads DDGPTMRGHR.

Belongs to the conotoxin N superfamily. Contains 5 disulfide bonds. Expressed by the venom duct.

It localises to the secreted. Its function is as follows. Probable neurotoxin. The protein is Conotoxin Im016 of Conus imperialis (Imperial cone).